A 1002-amino-acid polypeptide reads, in one-letter code: Glutamate receptor ionotropic, NMDA 3B (1002 aa).

An N-terminal signal peptide occupies residues 1–24 (MESVRTLWLSVALALAVGSRVVRG). Over 25 to 574 (HPQPCRVPTR…PIGAFMWPLH (550 aa)) the chain is Extracellular. 5 N-linked (GlcNAc...) asparagine glycosylation sites follow: Asn69, Asn212, Asn344, Asn451, and Asn465. 2 cysteine pairs are disulfide-bonded: Cys439/Cys475 and Cys445/Cys476. Glycine is bound by residues Ser531, Ser533, and Arg538. Ser533 and Arg538 together coordinate D-serine. The helical transmembrane segment at 575-594 (WSMWVGVFAALHLTALFLTL) threads the bilayer. The Cytoplasmic portion of the chain corresponds to 595–615 (YEWRSPYGLTPRGRNRGTVFS). Residues 616-627 (YSSALNLCYAIL) constitute an intramembrane region (discontinuously helical). Topologically, residues 628-641 (FGRTVSSKTPKCPT) are cytoplasmic. Residues 642-661 (GRFLMNLWAIFCLLVLSSYT) traverse the membrane as a helical segment. The Extracellular portion of the chain corresponds to 662-832 (ANLAAVMVGD…TLQMGVYHFS (171 aa)). Residue Ser701 coordinates glycine. Ser701, Ala702, and Asp745 together coordinate D-serine. Asp745 contacts glycine. The N-linked (GlcNAc...) asparagine glycan is linked to Asn786. A helical transmembrane segment spans residues 833–848 (GLFVLLCLGLGSALLT). Topologically, residues 849-1002 (SLGEHVFYRL…RLLHAAPAES (154 aa)) are cytoplasmic. A disordered region spans residues 882–910 (ALNTGPPEGQQERAEQERSGPKDELPATD). Residues 891–906 (QQERAEQERSGPKDEL) are compositionally biased toward basic and acidic residues. Residues 944-985 (LCSNGPGLQAELRELELRIEAARERLRSALLRRGELRALLGD) are a coiled coil. An involved in the trafficking and surface expression of NMDARs region spans residues 951–984 (LQAELRELELRIEAARERLRSALLRRGELRALLG).

The protein belongs to the glutamate-gated ion channel (TC 1.A.10.1) family. NR3B/GRIN3B subfamily. In terms of assembly, forms heterotetrameric channels that contain at least two GluN1 subunits and at least a combination of one GluN2 and one GluN3 subunits (in vitro). Forms heterotetrameric channels composed of two GluN1/zeta subunits (GRIN1), and two identical GluN3 subunits (GRIN3A or GRIN3B) (in vitro). Does not form functional homomeric channels. Expressed in the hippocampus, the corpus callosum, in the facial and trigeminal nuclei of the brainstem and the ventral horn of the spinal cord.

It localises to the cell membrane. Its subcellular location is the postsynaptic cell membrane. The catalysed reaction is Ca(2+)(in) = Ca(2+)(out). It carries out the reaction Na(+)(in) = Na(+)(out). With respect to regulation, excitatory glycine receptors are inhibited by D-serine at a concentrion of 100uM. Its function is as follows. Component of a non-conventional N-methyl-D-aspartate (NMDA) receptors (NMDARs) that function as heterotetrameric, ligand-gated cation channels with low calcium permeability and low voltage-dependent block by Mg(2+). Forms glutamatergic receptor complexes with GluN1 and GluN2 subunits which are activated by glycine binding to the GluN1 and GluN3 subunits and L-glutamate binding to GluN2 subunits. Forms excitatory glycinergic receptor complexes with GluN1 alone which are activated by glycine binding to the GluN1 and GluN3 subunits. GluN3B subunit also binds D-serine and, in the absence of glycine, activates glycinergic receptor complexes, but with lower efficacy than glycine. Each GluN3 subunit confers differential attributes to channel properties, including activation, deactivation and desensitization kinetics, pH sensitivity, Ca2(+) permeability, and binding to allosteric modulators. The chain is Glutamate receptor ionotropic, NMDA 3B from Rattus norvegicus (Rat).